A 154-amino-acid chain; its full sequence is Keratin-associated protein 9-9 (154 aa).

Tandem repeats lie at residues 8-12, 13-17, 18-22, 37-41, 42-46, 51-55, 56-60, 61-65, 66-70, 75-79, 124-128, 129-133, 134-137, and 148-152. A 14 X 5 AA repeats of C-C-[RQVGE]-[SPSTNQ]-[TASL] region spans residues 8 to 152; that stretch reads CCQPTCCRTT…TCVSSCCQPS (145 aa).

The protein belongs to the KRTAP type 9 family. In terms of assembly, interacts with hair keratins.

In the hair cortex, hair keratin intermediate filaments are embedded in an interfilamentous matrix, consisting of hair keratin-associated proteins (KRTAP), which are essential for the formation of a rigid and resistant hair shaft through their extensive disulfide bond cross-linking with abundant cysteine residues of hair keratins. The matrix proteins include the high-sulfur and high-glycine-tyrosine keratins. In Homo sapiens (Human), this protein is Keratin-associated protein 9-9 (KRTAP9-9).